A 476-amino-acid polypeptide reads, in one-letter code: Aspartyl/glutamyl-tRNA(Asn/Gln) amidotransferase subunit B (476 aa).

The protein belongs to the GatB/GatE family. GatB subfamily. As to quaternary structure, heterotrimer of A, B and C subunits.

It carries out the reaction L-glutamyl-tRNA(Gln) + L-glutamine + ATP + H2O = L-glutaminyl-tRNA(Gln) + L-glutamate + ADP + phosphate + H(+). The enzyme catalyses L-aspartyl-tRNA(Asn) + L-glutamine + ATP + H2O = L-asparaginyl-tRNA(Asn) + L-glutamate + ADP + phosphate + 2 H(+). Functionally, allows the formation of correctly charged Asn-tRNA(Asn) or Gln-tRNA(Gln) through the transamidation of misacylated Asp-tRNA(Asn) or Glu-tRNA(Gln) in organisms which lack either or both of asparaginyl-tRNA or glutaminyl-tRNA synthetases. The reaction takes place in the presence of glutamine and ATP through an activated phospho-Asp-tRNA(Asn) or phospho-Glu-tRNA(Gln). The sequence is that of Aspartyl/glutamyl-tRNA(Asn/Gln) amidotransferase subunit B from Clostridium botulinum (strain Okra / Type B1).